Reading from the N-terminus, the 197-residue chain is Beta-crystallin A2 (197 aa).

Residues 1–11 form an N-terminal arm region; the sequence is MSSAPAQGPAP. Beta/gamma crystallin 'Greek key' domains follow at residues 12–52 and 53–99; these read ASLT…KVEN and GAWV…RPVL. The tract at residues 100–105 is connecting peptide; it reads CANHSD. Beta/gamma crystallin 'Greek key' domains lie at 106-147 and 148-196; these read SRVT…KVSS and GAWV…RRVQ.

It belongs to the beta/gamma-crystallin family. In terms of assembly, homo/heterodimer, or complexes of higher-order. The structure of beta-crystallin oligomers seems to be stabilized through interactions between the N-terminal arms.

In terms of biological role, crystallins are the dominant structural components of the vertebrate eye lens. In Bos taurus (Bovine), this protein is Beta-crystallin A2 (CRYBA2).